A 393-amino-acid polypeptide reads, in one-letter code: Probable galacturonosyltransferase-like 8 (393 aa).

Residues 1–4 (MSSR) lie on the Cytoplasmic side of the membrane. Residues 5–25 (FSLTVVCLIALLPFVVGIRLI) traverse the membrane as a helical; Signal-anchor for type II membrane protein segment. Residues 26 to 393 (PARITSVGDG…SELTDDSSFL (368 aa)) are Lumenal-facing. N-linked (GlcNAc...) asparagine glycosylation occurs at Asn-226.

The protein belongs to the glycosyltransferase 8 family.

The protein localises to the golgi apparatus membrane. It participates in glycan metabolism; pectin biosynthesis. Functionally, may be involved in pectin and/or xylans biosynthesis in cell walls. The polypeptide is Probable galacturonosyltransferase-like 8 (GATL8) (Arabidopsis thaliana (Mouse-ear cress)).